We begin with the raw amino-acid sequence, 61 residues long: Large ribosomal subunit protein bL28 (61 aa).

Belongs to the bacterial ribosomal protein bL28 family.

The sequence is that of Large ribosomal subunit protein bL28 from Lactobacillus gasseri (strain ATCC 33323 / DSM 20243 / BCRC 14619 / CIP 102991 / JCM 1131 / KCTC 3163 / NCIMB 11718 / NCTC 13722 / AM63).